A 769-amino-acid chain; its full sequence is Integrin beta-2 (769 aa).

An N-terminal signal peptide occupies residues 1-22 (MLCRCSPLLLLVGLLTLRSALS). Q23 carries the post-translational modification Pyrrolidone carboxylic acid. Over 23–700 (QECAKYKVST…ETRECVKGPN (678 aa)) the chain is Extracellular. The region spanning 24-74 (ECAKYKVSTCRDCIESGPGCAWCQKLNFSGQGEPDSVRCDTREQLLAKGCV) is the PSI domain. Cystine bridges form between C25/C43, C33/C447, C36/C62, C46/C73, C191/C198, C246/C286, C386/C400, C420/C445, C449/C467, C459/C470, C472/C481, C483/C514, C497/C512, C506/C517, C519/C534, C536/C559, C541/C557, C549/C562, C564/C573, C575/C598, C582/C596, C590/C601, C603/C612, C615/C618, C622/C662, C628/C647, C631/C643, and C670/C695. N50 and N116 each carry an N-linked (GlcNAc...) asparagine glycan. The 240-residue stretch at 124-363 (GYPIDLYYLM…ELIKNAYNKL (240 aa)) folds into the VWFA domain. Residues S136 and S138 each coordinate Mg(2+). S138, D141, D142, and D173 together coordinate Ca(2+). Residues N229, D231, P233, and E234 each coordinate Ca(2+). A Mg(2+)-binding site is contributed by E234. N254 carries an N-linked (GlcNAc...) asparagine glycan. Ca(2+) is bound by residues D264 and E347. Positions 397 to 399 (RGD) match the Cell attachment site motif. I-EGF domains lie at 449–482 (CGDS…KHCE), 483–535 (CQTQ…QFCE), 536–574 (CDNM…SACQ), and 575–613 (CLKS…PLCT). N-linked (GlcNAc...) asparagine glycosylation is present at N501. N642 is a glycosylation site (N-linked (GlcNAc...) asparagine). A helical transmembrane segment spans residues 701 to 723 (IAAIVGGTVGGVVLVGIFLLVIW). At 724-769 (KVLTHLSDLREYKRFEKEKLKSQWNNDNPLFKSATTTVMNPKFAER) the chain is on the cytoplasmic side. S745 and S756 each carry phosphoserine. Phosphothreonine occurs at positions 758 and 760.

The protein belongs to the integrin beta chain family. Heterodimer of an alpha and a beta subunit. The ITGB2 beta subunit associates with the ITGAL, ITGAM, ITGAX or ITGAD alpha subunits. Found in a complex with CD177 and ITGAM/CD11b. Interacts with FGR. Interacts with COPS5 and RANBP9. Interacts with FLNA (via filamin repeats 4, 9, 12, 17, 19, 21, and 23). Interacts with THBD. Both Ser-745 and Ser-756 become phosphorylated when T-cells are exposed to phorbol esters. Phosphorylation on Thr-758 (but not on Ser-756) allows interaction with 14-3-3 proteins.

The protein localises to the cell membrane. It is found in the membrane raft. Its function is as follows. Integrin ITGAL/ITGB2 is a receptor for ICAM1, ICAM2, ICAM3 and ICAM4. Integrin ITGAL/ITGB2 is also a receptor for the secreted form of ubiquitin-like protein ISG15; the interaction is mediated by ITGAL. Integrins ITGAM/ITGB2 and ITGAX/ITGB2 are receptors for the iC3b fragment of the third complement component and for fibrinogen. Integrin ITGAX/ITGB2 recognizes the sequence G-P-R in fibrinogen alpha-chain. Integrin ITGAM/ITGB2 recognizes P1 and P2 peptides of fibrinogen gamma chain. Integrin ITGAM/ITGB2 is also a receptor for factor X. Integrin ITGAD/ITGB2 is a receptor for ICAM3 and VCAM1. Contributes to natural killer cell cytotoxicity. Involved in leukocyte adhesion and transmigration of leukocytes including T-cells and neutrophils. Triggers neutrophil transmigration during lung injury through PTK2B/PYK2-mediated activation. Integrin alpha-L/beta-2 in association with ICAM3, contributes to apoptotic neutrophil phagocytosis by macrophages. The sequence is that of Integrin beta-2 (ITGB2) from Sus scrofa (Pig).